Consider the following 260-residue polypeptide: Dolichol-phosphate mannosyltransferase subunit 1 (260 aa).

The segment at 1–20 (MAAEEASRSSPRFRREPKGR) is disordered. Residue Ala-2 is modified to N-acetylalanine. The residue at position 9 (Ser-9) is a Phosphoserine. Residues Pro-32, Tyr-34, Glu-36, Ile-63, Asp-65, Asp-118, Ala-119, Asp-120, Arg-147, Arg-234, and Lys-240 each coordinate GDP-alpha-D-mannose. Asp-120 contacts Mg(2+). Position 120 (Asp-120) interacts with Mn(2+).

The protein belongs to the glycosyltransferase 2 family. As to quaternary structure, component of the dolichol-phosphate mannose (DPM) synthase complex composed of DPM1, DPM2 and DPM3; within the complex, directly interacts with DPM3. This interaction may stabilize DPM1. It depends on Mg(2+) as a cofactor. Mn(2+) serves as cofactor. Ca(2+) is required as a cofactor.

Its subcellular location is the endoplasmic reticulum. The catalysed reaction is a di-trans,poly-cis-dolichyl phosphate + GDP-alpha-D-mannose = a di-trans,poly-cis-dolichyl beta-D-mannosyl phosphate + GDP. It functions in the pathway protein modification; protein glycosylation. Its function is as follows. Transfers mannose from GDP-mannose to dolichol monophosphate to form dolichol phosphate mannose (Dol-P-Man) which is the mannosyl donor in pathways leading to N-glycosylation, glycosyl phosphatidylinositol membrane anchoring, and O-mannosylation of proteins; catalytic subunit of the dolichol-phosphate mannose (DPM) synthase complex. This is Dolichol-phosphate mannosyltransferase subunit 1 (DPM1) from Bos taurus (Bovine).